Here is a 523-residue protein sequence, read N- to C-terminus: Ubiquitin carboxyl-terminal hydrolase 22-A (523 aa).

The UBP-type zinc-finger motif lies at 4-121; the sequence is AGCSHVNSFK…KEEQRKAWKL (118 aa). Residues cysteine 6, histidine 8, cysteine 46, cysteine 49, cysteine 59, cysteine 62, cysteine 67, histidine 72, histidine 76, histidine 82, cysteine 95, and cysteine 98 each contribute to the Zn(2+) site. A USP domain is found at 174-518; that stretch reads RGLINLGNTC…EGYLLFYHKQ (345 aa). Residue cysteine 183 is the Nucleophile of the active site. Residue histidine 477 is the Proton acceptor of the active site.

It belongs to the peptidase C19 family. UBP8 subfamily. As to quaternary structure, component of some SAGA transcription coactivator-HAT complexes.

It localises to the nucleus. It carries out the reaction Thiol-dependent hydrolysis of ester, thioester, amide, peptide and isopeptide bonds formed by the C-terminal Gly of ubiquitin (a 76-residue protein attached to proteins as an intracellular targeting signal).. In terms of biological role, histone deubiquitinating component of the transcription regulatory histone acetylation (HAT) complex SAGA. Catalyzes the deubiquitination of both histones H2A and H2B, thereby acting as a coactivator. Recruited to specific gene promoters by activators, where it is required for transcription. This chain is Ubiquitin carboxyl-terminal hydrolase 22-A (usp22-a), found in Xenopus laevis (African clawed frog).